The following is a 629-amino-acid chain: Arginine--tRNA ligase (629 aa).

The short motif at 128–138 (VNPTKPLHMGH) is the 'HIGH' region element.

It belongs to the class-I aminoacyl-tRNA synthetase family.

It is found in the cytoplasm. It carries out the reaction tRNA(Arg) + L-arginine + ATP = L-arginyl-tRNA(Arg) + AMP + diphosphate. The chain is Arginine--tRNA ligase (argS) from Pyrococcus horikoshii (strain ATCC 700860 / DSM 12428 / JCM 9974 / NBRC 100139 / OT-3).